We begin with the raw amino-acid sequence, 169 residues long: Small ribosomal subunit protein bS16 (169 aa).

The interval 114 to 169 (AEGPTAEAITEKRRKAKEEAEAKAAAEAEAAEKAEAEAAEKAAAEAAEESEEASAE) is disordered. Basic and acidic residues predominate over residues 129 to 156 (AKEEAEAKAAAEAEAAEKAEAEAAEKAA). The span at 159–169 (AAEESEEASAE) shows a compositional bias: acidic residues.

It belongs to the bacterial ribosomal protein bS16 family.

This is Small ribosomal subunit protein bS16 from Corynebacterium urealyticum (strain ATCC 43042 / DSM 7109).